The following is a 283-amino-acid chain: Pantothenate synthetase (283 aa).

26–33 (MGNLHEGH) is an ATP binding site. Catalysis depends on H33, which acts as the Proton donor. Q57 contributes to the (R)-pantoate binding site. Q57 serves as a coordination point for beta-alanine. 144 to 147 (GKKD) contributes to the ATP binding site. Q150 provides a ligand contact to (R)-pantoate. 181–184 (LSSR) is an ATP binding site.

This sequence belongs to the pantothenate synthetase family. Homodimer.

It localises to the cytoplasm. It catalyses the reaction (R)-pantoate + beta-alanine + ATP = (R)-pantothenate + AMP + diphosphate + H(+). It functions in the pathway cofactor biosynthesis; (R)-pantothenate biosynthesis; (R)-pantothenate from (R)-pantoate and beta-alanine: step 1/1. Functionally, catalyzes the condensation of pantoate with beta-alanine in an ATP-dependent reaction via a pantoyl-adenylate intermediate. This Variovorax paradoxus (strain S110) protein is Pantothenate synthetase.